The following is a 142-amino-acid chain: Trafficking protein particle complex subunit 1 (142 aa).

Belongs to the TRAPP small subunits family. BET5 subfamily. Part of the multisubunit TRAPP (transport protein particle) complex.

The protein resides in the golgi apparatus. The protein localises to the cis-Golgi network. It is found in the endoplasmic reticulum. Its function is as follows. May play a role in vesicular transport from endoplasmic reticulum to Golgi. The polypeptide is Trafficking protein particle complex subunit 1 (trappc1-1) (Dictyostelium discoideum (Social amoeba)).